The chain runs to 476 residues: Methylenetetrahydrofolate--tRNA-(uracil-5-)-methyltransferase TrmFO (476 aa).

Position 14–19 (14–19 (GGGLAG)) interacts with FAD.

It belongs to the MnmG family. TrmFO subfamily. The cofactor is FAD.

Its subcellular location is the cytoplasm. The enzyme catalyses uridine(54) in tRNA + (6R)-5,10-methylene-5,6,7,8-tetrahydrofolate + NADH + H(+) = 5-methyluridine(54) in tRNA + (6S)-5,6,7,8-tetrahydrofolate + NAD(+). It carries out the reaction uridine(54) in tRNA + (6R)-5,10-methylene-5,6,7,8-tetrahydrofolate + NADPH + H(+) = 5-methyluridine(54) in tRNA + (6S)-5,6,7,8-tetrahydrofolate + NADP(+). Its function is as follows. Catalyzes the folate-dependent formation of 5-methyl-uridine at position 54 (M-5-U54) in all tRNAs. This is Methylenetetrahydrofolate--tRNA-(uracil-5-)-methyltransferase TrmFO from Brucella anthropi (strain ATCC 49188 / DSM 6882 / CCUG 24695 / JCM 21032 / LMG 3331 / NBRC 15819 / NCTC 12168 / Alc 37) (Ochrobactrum anthropi).